The following is a 365-amino-acid chain: tRNA-specific 2-thiouridylase MnmA (365 aa).

ATP-binding positions include 6–13 and Leu32; that span reads AMSGGVDS. Cys101 (nucleophile) is an active-site residue. A disulfide bond links Cys101 and Cys199. Gly125 is an ATP binding site. The interaction with tRNA stretch occupies residues 149–151; it reads KDQ. Residue Cys199 is the Cysteine persulfide intermediate of the active site.

This sequence belongs to the MnmA/TRMU family.

Its subcellular location is the cytoplasm. The catalysed reaction is S-sulfanyl-L-cysteinyl-[protein] + uridine(34) in tRNA + AH2 + ATP = 2-thiouridine(34) in tRNA + L-cysteinyl-[protein] + A + AMP + diphosphate + H(+). Functionally, catalyzes the 2-thiolation of uridine at the wobble position (U34) of tRNA, leading to the formation of s(2)U34. This chain is tRNA-specific 2-thiouridylase MnmA, found in Corynebacterium glutamicum (strain R).